The chain runs to 251 residues: 3-deoxy-manno-octulosonate cytidylyltransferase (251 aa).

The protein belongs to the KdsB family.

It is found in the cytoplasm. The enzyme catalyses 3-deoxy-alpha-D-manno-oct-2-ulosonate + CTP = CMP-3-deoxy-beta-D-manno-octulosonate + diphosphate. It functions in the pathway nucleotide-sugar biosynthesis; CMP-3-deoxy-D-manno-octulosonate biosynthesis; CMP-3-deoxy-D-manno-octulosonate from 3-deoxy-D-manno-octulosonate and CTP: step 1/1. The protein operates within bacterial outer membrane biogenesis; lipopolysaccharide biosynthesis. Functionally, activates KDO (a required 8-carbon sugar) for incorporation into bacterial lipopolysaccharide in Gram-negative bacteria. This chain is 3-deoxy-manno-octulosonate cytidylyltransferase, found in Sodalis glossinidius (strain morsitans).